Consider the following 468-residue polypeptide: Tissue alpha-L-fucosidase (468 aa).

Residues 1–29 (MRAPGERWRPAGAALWLLLLLLLLGATES) form the signal peptide. Thr-172 carries the post-translational modification Phosphothreonine. N-linked (GlcNAc...) asparagine glycosylation is found at Asn-243, Asn-270, and Asn-384.

Belongs to the glycosyl hydrolase 29 family. Homotetramer.

Its subcellular location is the lysosome. It carries out the reaction an alpha-L-fucoside + H2O = L-fucose + an alcohol. The catalysed reaction is a neolactoside IV(2)-alpha-Fuc-nLc4Cer(d18:1(4E)) + H2O = a neolactoside nLc4Cer(d18:1(4E)) + L-fucose. It catalyses the reaction a neolactoside IV(2)-alpha-Fuc-nLc4Cer(d18:0) + H2O = a neolactoside nLc4Cer(d18:0) + L-fucose. Its function is as follows. Alpha-L-fucosidase is responsible for hydrolyzing the alpha-1,6-linked fucose joined to the reducing-end N-acetylglucosamine of the carbohydrate moieties of glycoproteins. This chain is Tissue alpha-L-fucosidase (FUCA1), found in Macaca fascicularis (Crab-eating macaque).